Here is a 360-residue protein sequence, read N- to C-terminus: UDP-3-O-acylglucosamine N-acyltransferase (360 aa).

The active-site Proton acceptor is His248.

Belongs to the transferase hexapeptide repeat family. LpxD subfamily. As to quaternary structure, homotrimer.

The catalysed reaction is a UDP-3-O-[(3R)-3-hydroxyacyl]-alpha-D-glucosamine + a (3R)-hydroxyacyl-[ACP] = a UDP-2-N,3-O-bis[(3R)-3-hydroxyacyl]-alpha-D-glucosamine + holo-[ACP] + H(+). It participates in bacterial outer membrane biogenesis; LPS lipid A biosynthesis. Catalyzes the N-acylation of UDP-3-O-acylglucosamine using 3-hydroxyacyl-ACP as the acyl donor. Is involved in the biosynthesis of lipid A, a phosphorylated glycolipid that anchors the lipopolysaccharide to the outer membrane of the cell. This is UDP-3-O-acylglucosamine N-acyltransferase from Chlamydia pneumoniae (Chlamydophila pneumoniae).